Here is a 510-residue protein sequence, read N- to C-terminus: Cytochrome P450 90D2 (510 aa).

Residues Met6–Val26 traverse the membrane as a helical segment. Cys444 serves as a coordination point for heme.

The protein belongs to the cytochrome P450 family. It depends on heme as a cofactor.

It is found in the membrane. It catalyses the reaction 3-epi-6-deoxocathasterone + reduced [NADPH--hemoprotein reductase] + O2 = 6-deoxotyphasterol + oxidized [NADPH--hemoprotein reductase] + H2O + H(+). The enzyme catalyses (22S,24R)-22-hydroxy-5alpha-ergostan-3-one + reduced [NADPH--hemoprotein reductase] + O2 = 3-dehydro-6-deoxoteasterone + oxidized [NADPH--hemoprotein reductase] + H2O + H(+). The catalysed reaction is 6-deoxycathasterone + reduced [NADPH--hemoprotein reductase] + O2 = 6-deoxoteasterone + oxidized [NADPH--hemoprotein reductase] + H2O + H(+). The protein operates within plant hormone biosynthesis; brassinosteroid biosynthesis. In terms of biological role, involved in reduction steps of the biosynthesis of plant campesterol-derivative steroids, ending to castasterone (CS) but missing brassinolide (BL). Catalyzes the conversion of (22S,24R)-22-hydroxy-5alpha-ergostan-3-one (22-hydroxy-campesta-3-one, 22-OH-3-one) to 3-dehydro-6-deoxoteasterone (6-deoxo3DT, 6-deoxo-3-DHT), 3-epi-6-deoxocathasterone (3-epi-6-deoxoCT) to 6-deoxotyphasterol (6-deoxoTY) and of 6-deoxocathasterone (6-deoxoCT) to 6-deoxoteasterone (6-deoxoTE). This is Cytochrome P450 90D2 from Brachypodium distachyon (Purple false brome).